The chain runs to 127 residues: Anti-adapter protein IraD (127 aa).

Belongs to the GpW/Gp25 family. IraD subfamily. Interacts with RssB.

The protein localises to the cytoplasm. Its function is as follows. Inhibits RpoS proteolysis by regulating RssB activity, thereby increasing the stability of the sigma stress factor RpoS during oxidative stress. Its effect on RpoS stability is due to its interaction with RssB, which probably blocks the interaction of RssB with RpoS, and the consequent delivery of the RssB-RpoS complex to the ClpXP protein degradation pathway. This is Anti-adapter protein IraD from Escherichia coli (strain UTI89 / UPEC).